Reading from the N-terminus, the 130-residue chain is uncharacterized protein (130 aa).

Positions 1–26 (MINNFKGILIIILSFLFLLLFKYSNA) are cleaved as a signal peptide. Asn58 is a glycosylation site (N-linked (GlcNAc...) asparagine).

The protein belongs to the Dictyostelium gerABC family.

It is found in the secreted. This is an uncharacterized protein from Dictyostelium discoideum (Social amoeba).